The chain runs to 350 residues: MWTMGYNEGGADSFNGGRKLRPLIPRLTSCPTAAVNTNSDHRFNMAVVTMTAEQNKRELMMLNSEPQHPPVMVSSRWNPTPDQLRVLEELYRQGTRTPSADHIQQITAQLRRYGKIEGKNVFYWFQNHKARERQKRRRQMETGHEETVLSTASLVSNHGFDKKDPPGYKVEQVKNWICSVGCDTQPEKPSRDYHLEEPANIRVEHNARCGGDERRSFLGINTTWQMMQLPPSFYSSSHHHHQRNLILNSPTVSSNMSNSNNAVSASKDTVTVSPVFLRTREATNTETCHRNGDDNKDQEQHEDCSNGELDHQEQTLELFPLRKEGFCSDGEKDKNISGIHCFYEFLPLKN.

The homeobox; WUS-type DNA-binding region spans 72 to 136; that stretch reads MVSSRWNPTP…NHKARERQKR (65 aa). Residues 283–308 form a disordered region; that stretch reads TNTETCHRNGDDNKDQEQHEDCSNGE.

The protein belongs to the WUS homeobox family.

It localises to the nucleus. In terms of biological role, transcription factor which may be involved in developmental processes. The chain is WUSCHEL-related homeobox 1 (WOX1) from Arabidopsis thaliana (Mouse-ear cress).